Here is a 311-residue protein sequence, read N- to C-terminus: 3-oxo-4,17-pregnadiene-20-carboxyl-CoA hydratase alpha subunit (311 aa).

A DUF35 region spans residues 198–295; the sequence is WDGVKAHELR…VAIGMPVRAT (98 aa).

Belongs to the thioester dehydratase family. As to quaternary structure, heterodimer composed of ChsH1 and ChsH2. Two heterodimers combine to form a heterotetramer. The complex interacts with Ltp2 via the DUF35 C-terminal region of ChsH2. The ChsH1-ChsH2-Ltp2 protein complex is composed of two protomers that form a heterohexameric structure through the Ltp2 dimerization interface.

It catalyses the reaction 3-oxochola-4,17-dien-22-oyl-CoA + H2O = 17-hydroxy-3-oxochol-4-en-22-oyl-CoA. The catalysed reaction is (2E)-octenoyl-CoA + H2O = 3-hydroxyoctanoyl-CoA. It carries out the reaction (2E)-decenoyl-CoA + H2O = 3-hydroxydecanoyl-CoA. The protein operates within steroid metabolism; cholesterol degradation. In the absence of the Ltp2 aldolase, ChsH1/ChsH2 can hydrate only about 30% of the 3-OPDC-CoA substrate. Complete turnover requires the presence of Ltp2. Involved in cholesterol side chain degradation. Catalyzes the hydration of 3-oxo-4,17-pregnadiene-20-carboxyl-CoA (3-OPDC-CoA) to form 17-hydroxy-3-oxo-4-pregnene-20-carboxyl-CoA (17-HOPC-CoA), in the modified beta-oxidation pathway for cholesterol side chain degradation. Can also use octenoyl-CoA and decenoyl-CoA, with lower efficiency. The chain is 3-oxo-4,17-pregnadiene-20-carboxyl-CoA hydratase alpha subunit from Mycobacterium tuberculosis (strain ATCC 25618 / H37Rv).